A 395-amino-acid chain; its full sequence is Phosphoglycerate kinase (395 aa).

Substrate is bound by residues 21 to 23 (DLN), R36, 59 to 62 (HLGR), R113, and R146. ATP is bound by residues K197, E324, and 350–353 (GGDT).

It belongs to the phosphoglycerate kinase family. As to quaternary structure, monomer.

The protein resides in the cytoplasm. The enzyme catalyses (2R)-3-phosphoglycerate + ATP = (2R)-3-phospho-glyceroyl phosphate + ADP. Its pathway is carbohydrate degradation; glycolysis; pyruvate from D-glyceraldehyde 3-phosphate: step 2/5. This is Phosphoglycerate kinase from Acinetobacter baylyi (strain ATCC 33305 / BD413 / ADP1).